The chain runs to 301 residues: Probable alpha-L-glutamate ligase (301 aa).

Residues 104 to 287 enclose the ATP-grasp domain; it reads LQFLSRKGID…IAGMIIEFIE (184 aa). ATP is bound by residues lysine 141, 178-179, aspartate 187, and 211-213; these read EF and RSN. 3 residues coordinate Mg(2+): aspartate 248, glutamate 260, and asparagine 262. 3 residues coordinate Mn(2+): aspartate 248, glutamate 260, and asparagine 262.

Belongs to the RimK family. Mg(2+) serves as cofactor. Mn(2+) is required as a cofactor.

The protein is Probable alpha-L-glutamate ligase of Coxiella burnetii (strain CbuK_Q154) (Coxiella burnetii (strain Q154)).